The following is a 541-amino-acid chain: Chlorophyllide a oxygenase, chloroplastic (541 aa).

Residues L114–S151 adopt a coiled-coil conformation. The span at A178 to R192 shows a compositional bias: polar residues. Residues A178–P208 are disordered. One can recognise a Rieske domain in the interval W220–I320. [2Fe-2S] cluster contacts are provided by C261, H263, C280, and H283. 4 residues coordinate Fe cation: D359, D363, H366, and H371.

Expressed in leaves and germinating seedlings, but not in sheaths and roots.

The protein localises to the plastid. The protein resides in the chloroplast membrane. It is found in the chloroplast thylakoid membrane. It carries out the reaction chlorophyllide a + 2 NADPH + 2 O2 + 2 H(+) = chlorophyllide b + 2 NADP(+) + 3 H2O. Its function is as follows. Catalyzes a two-step oxygenase reaction involved in the synthesis of chlorophyll b. Acts specifically on the non-esterified chlorophyllide a and not on chlorophyll a. In Oryza sativa subsp. japonica (Rice), this protein is Chlorophyllide a oxygenase, chloroplastic (CAO).